The primary structure comprises 200 residues: MARYTGPRGRRDRRAGVMLSSMRKNPLEKKPYPPGEHGRDRQRQTEYGLRLMEKQKARWYYGVSERQFRRAYEEAIRQPGVSGENLLRLMELRMDNVVYRMGFATSRPQARQLVVHGHFLLNGRKHNIPSATLKPGDVITVRDKSRRLQPIQEAVEQVVAVPAWLEADHENFTGRVLHTPSRDEIDAPVEEQLIIEFYSR.

Residues 1–43 form a disordered region; it reads MARYTGPRGRRDRRAGVMLSSMRKNPLEKKPYPPGEHGRDRQR. The span at 25–43 shows a compositional bias: basic and acidic residues; it reads NPLEKKPYPPGEHGRDRQR. The 67-residue stretch at 92–158 folds into the S4 RNA-binding domain; the sequence is LRMDNVVYRM…QPIQEAVEQV (67 aa).

The protein belongs to the universal ribosomal protein uS4 family. As to quaternary structure, part of the 30S ribosomal subunit. Contacts protein S5. The interaction surface between S4 and S5 is involved in control of translational fidelity.

Functionally, one of the primary rRNA binding proteins, it binds directly to 16S rRNA where it nucleates assembly of the body of the 30S subunit. Its function is as follows. With S5 and S12 plays an important role in translational accuracy. This Rubrobacter xylanophilus (strain DSM 9941 / JCM 11954 / NBRC 16129 / PRD-1) protein is Small ribosomal subunit protein uS4.